Reading from the N-terminus, the 184-residue chain is Putative F-box protein At4g22420 (184 aa).

The 46-residue stretch at 1–46 folds into the F-box domain; that stretch reads MAECPTDLINEMFLRLRATTLKKCRVLSKPCFSLIDSPEKRVIERS. The tract at residues 68-126 is disordered; the sequence is DDDEEEGNELKKSQARRNGVAKGEGNGNKVNGEAQEEVDDEEDDDDDASKGRGKHSRHV. Residues 85 to 100 show a composition bias toward low complexity; it reads NGVAKGEGNGNKVNGE. Residues 101 to 114 show a composition bias toward acidic residues; it reads AQEEVDDEEDDDDD.

The sequence is that of Putative F-box protein At4g22420 from Arabidopsis thaliana (Mouse-ear cress).